The sequence spans 188 residues: Der GTPase-activating protein YihI (188 aa).

Disordered regions lie at residues 1–80 (MKQP…VPVP) and 162–188 (DEDD…KDTF). Over residues 27 to 37 (TRDELDAEARD) the composition is skewed to basic and acidic residues. The segment covering 47 to 57 (NRSGARTNVEG) has biased composition (polar residues).

Belongs to the YihI family. As to quaternary structure, interacts with Der.

Its function is as follows. A GTPase-activating protein (GAP) that modifies Der/EngA GTPase function. May play a role in ribosome biogenesis. This chain is Der GTPase-activating protein YihI, found in Yersinia pseudotuberculosis serotype O:1b (strain IP 31758).